Consider the following 357-residue polypeptide: Alanine racemase (357 aa).

K33 serves as the catalytic Proton acceptor; specific for D-alanine. At K33 the chain carries N6-(pyridoxal phosphate)lysine. R129 is a binding site for substrate. Catalysis depends on Y253, which acts as the Proton acceptor; specific for L-alanine. M301 provides a ligand contact to substrate.

This sequence belongs to the alanine racemase family. In terms of assembly, homodimer. It depends on pyridoxal 5'-phosphate as a cofactor.

It carries out the reaction L-alanine = D-alanine. Its pathway is amino-acid biosynthesis; D-alanine biosynthesis; D-alanine from L-alanine: step 1/1. In terms of biological role, catalyzes the interconversion of L-alanine and D-alanine. Is highly specific for alanine as substrate. May serve both anabolic and catabolic purposes. This is Alanine racemase from Pseudomonas taetrolens.